The primary structure comprises 365 residues: MEVCLPNGHQIVDLINNAFEGRVSIYSAQEGWDKTISAQPDMMVCGGAVVCMHCLGVVGSLQRKLKHLPHHRCNQQIRHQDYVDVQFADRVTAHWKRGMLSFVAQMHAMMNDVSPEDLDRVRTEGGSLVELNWLQVDPNSMFRSIHSSWTDPLQVVDDLDTKLDQYWTALNLMIDSSDLVPNFMMRDPSHAFNGVRLEGDARQTQFSRTFDSRSSLEWGVMVYDYSELEHDPSKGRAYRKELVTPARDFGHFGLSHYSRATTPILGKMPAVFSGMLTGNCKMYPFIKGTAKLKTVRKLVDSVNHAWGVEKIRYALGPGGMTGWYDRTMQQAPIVLTPAALTMFSDTTKFGDLDYPVMIGDPMILG.

The segment at 51–73 adopts a CCHC-type zinc-finger fold; sequence CMHCLGVVGSLQRKLKHLPHHRC.

Belongs to the orthoreovirus sigma-3 protein family. In terms of assembly, heterohexamer of three sigma-3 and three Mu-1 proteins. The RNA-binding form is probably a homodimer. In terms of processing, cleaved during virus the endosomal proteolytic disassembly of the outer capsid.

It localises to the virion. Its function is as follows. Stimulates translation by blocking the activation of the dsRNA-dependent protein kinase EIF2AK2/PKR, thereby inhibiting the host interferon response. Sigma3 prevents the activation of EIF2AK2 by competing with the kinase for dsRNA-binding. In terms of biological role, the viral outer shell polypeptides, of which sigma-3 is one, impose structural constraints that prevent elongation of nascent transcripts by the RNA-dependent RNA polymerase lambda-3. This chain is Outer capsid protein sigma-3 (S4), found in Mammalia (T1L).